We begin with the raw amino-acid sequence, 843 residues long: MGAFTQHVLSEGWSFKDSGDQSPDAWLSVPTVPSVVHQDLQANGKLDDPFIGLNELSARWVNEKSWTYRNVFQKPTVPAGSSIFLVFDGLDTFAKVKLDGQVILESDNMFLAHRVDITKALDVEGEHTLEIDFDCALLRARELRKQHPDHKWVGFNGDTARLSVRKAQYHWGWDWGPVLMTAGIWKEVRLEVYSAKISDLWTEVHLAEDHSKARITAAAEVETQGTGNSYKATFTLSLQGQQIGKEVATLDGNVAKTTFDVQEPSLWWPNGYGDQTLYEISVSLEKEEEQAHQVSKKFGIRTAEVIQRPDKHGKSFFFRINGVDIFCGGACWIPADSLLTNITPDRYRKWIELMAVGHQVMIRVWGGGIYEDESFYQACDEVGVMVWQDFMFGCGNYPTWPEILESIEKEAEYNLRRLRHHPSIVIWVGNNEDYQVQEQQGLTYNYADKDPESWLKTDFPARYIYEHLLPKAVQKIIPSAYYHPGSPWGDGKITSDPTVGDMHQWNVWHGTQEKYQIFDTLGGRFNSEFGMEAFPHMSTIDHFVTNEADKYPQSHVLDFHNKADGHERRIATYLVENLRTATDLEVYIYLTQVVQAETMMFGYRGWRRQWGDERHCGGALLWQLNDCWPTISWAIVDYFLRPKPAFYAVSRVLKPLAIGVRREHHDWSVSHAQPPKTSKYELWVVSSLLKEVIGKVELRFISIKTGLAIHESIVRENVTIVPNGTTNILDGVIDHAVDEPHVLAARLWVDGELVARDVDWPQPFKYLDLSDRGLEITRISKTESEQVLELSARKPVKCLVFEERDNVRVSDSAIDIVPGDEQFVTIKGLKRSDAPLKYKFLGQ.

Catalysis depends on E432, which acts as the Proton donor.

It belongs to the glycosyl hydrolase 2 family. Beta-mannosidase B subfamily.

The enzyme catalyses Hydrolysis of terminal, non-reducing beta-D-mannose residues in beta-D-mannosides.. It participates in glycan metabolism; N-glycan degradation. Functionally, exoglycosidase that cleaves the single beta-linked mannose residue from the non-reducing end of beta-mannosidic oligosaccharides of various complexity and length. Prefers mannobiose over mannotriose and has no activity against polymeric mannan. Is also severely restricted by galactosyl substitutions at the +1 subsite. Releases the terminal mannose residue from mannobiose, mannotriose and galactosyl-mannotriose (GM3), but not from galactosyl-mannobiose (GM2) or di-galactosyl-mannopentaose (G2M5). The chain is Beta-mannosidase B (mndB) from Emericella nidulans (strain FGSC A4 / ATCC 38163 / CBS 112.46 / NRRL 194 / M139) (Aspergillus nidulans).